The following is a 62-amino-acid chain: UPF0434 protein ASA_1553 (62 aa).

This sequence belongs to the UPF0434 family.

This is UPF0434 protein ASA_1553 from Aeromonas salmonicida (strain A449).